Reading from the N-terminus, the 176-residue chain is Oleosin Ara h 14.0102 (176 aa).

Residue A2 is modified to N-acetylalanine; alternate. 2 helical membrane passes run G61 to A81 and F87 to L107. Positions K156–S176 are disordered.

This sequence belongs to the oleosin family. In terms of assembly, homodimer. Forms oligomers. As to expression, expressed in seeds (at protein level). Not expressed in leaves.

Its subcellular location is the lipid droplet. The protein localises to the membrane. Its function is as follows. May have a structural role to stabilize the lipid body during desiccation of the seed by preventing coalescence of the oil. Probably interacts with both lipid and phospholipid moieties of lipid bodies. May also provide recognition signals for specific lipase anchorage in lipolysis during seedling growth. This chain is Oleosin Ara h 14.0102, found in Arachis hypogaea (Peanut).